A 162-amino-acid chain; its full sequence is MKIILRKDVATLGDAGEVVTVKNGYANNYLIPQGFAIRATEGTLKALETEKKQQAHKIEQRRKEARELSAKIEQMTLNISTKAGESGKLFGTVTSGDIADALKAQGVEIDRRKIQLEAPIKALGKYEAVAKIYMDIAAKLNIVVGAEGAEAVETAEAPEAGE.

Belongs to the bacterial ribosomal protein bL9 family.

In terms of biological role, binds to the 23S rRNA. The sequence is that of Large ribosomal subunit protein bL9 from Chlorobaculum parvum (strain DSM 263 / NCIMB 8327) (Chlorobium vibrioforme subsp. thiosulfatophilum).